We begin with the raw amino-acid sequence, 265 residues long: MKPAMETAAEENTEQSQERKGCFECCIKCLGGVPYASLVATILCFSGVALFCGCGHVALAGTVAILEQHFSTNASDHALLSEVIQLMQYVIYGIASFFFLYGIILLAEGFYTTSAVKELHGEFKTTACGRCISGMFVFLTYVLGVAWLGVFGFSAVPVFMFYNIWSTCEVIKSPQTNGTTGVEQICVDIRQYGIIPWNAFPGKICGSALENICNTNEFYMSYHLFIVACAGAGATVIALLIYMMATTYNYAVLKFKSREDCCTKF.

A helical transmembrane segment spans residues 31 to 51 (GGVPYASLVATILCFSGVALF). N-linked (GlcNAc...) asparagine glycosylation is present at asparagine 73. Transmembrane regions (helical) follow at residues 90 to 110 (VIYG…AEGF) and 136 to 156 (FVFL…FSAV). Asparagine 177 is a glycosylation site (N-linked (GlcNAc...) asparagine). Residues 224 to 244 (LFIVACAGAGATVIALLIYMM) traverse the membrane as a helical segment. Serine 257 bears the Phosphoserine mark.

This sequence belongs to the myelin proteolipid protein family. In terms of assembly, interacts with SERT. In terms of tissue distribution, neurons and glia; cerebellar Bergmann glia, in glia within white matter tracts of the cerebellum and cerebrum, and in embryonic dorsal root ganglia.

It is found in the cell membrane. Its function is as follows. May be involved in neural development. Involved in regulation of osteoblast function and bone formation. Involved in matrix vesicle release by osteoblasts; this function seems to involve maintenance of the actin cytoskeleton. May be involved in cellular trafficking of SERT and thereby in regulation of serotonin uptake. The sequence is that of Neuronal membrane glycoprotein M6-b (GPM6B) from Homo sapiens (Human).